A 543-amino-acid polypeptide reads, in one-letter code: Dipeptide-binding protein DppE (543 aa).

The first 22 residues, M1 to G22, serve as a signal peptide directing secretion. C23 is lipidated: N-palmitoyl cysteine. C23 carries S-diacylglycerol cysteine lipidation.

The protein belongs to the bacterial solute-binding protein 5 family.

It is found in the cell membrane. Functionally, probably part of the ABC transporter DppBCDE involved in dipeptide transport. This Bacillus subtilis (strain 168) protein is Dipeptide-binding protein DppE (dppE).